Here is a 502-residue protein sequence, read N- to C-terminus: Dynein regulatory complex subunit 2 (502 aa).

2 coiled-coil regions span residues Asp-96–Ile-160 and Glu-252–Glu-285.

The protein belongs to the DRC2 family. In terms of assembly, component of the nexin-dynein regulatory complex (N-DRC). Interacts with DRC1.

Its subcellular location is the cytoplasm. The protein resides in the cytoskeleton. It localises to the flagellum basal body. It is found in the cell projection. The protein localises to the cilium. Its subcellular location is the flagellum. The protein resides in the flagellum axoneme. Component of the nexin-dynein regulatory complex (N-DRC), a key regulator of ciliary/flagellar motility which maintains the alignment and integrity of the distal axoneme and regulates microtubule sliding in motile axonemes. Plays a critical role in the assembly of N-DRC and also stabilizes the assembly of multiple inner dynein arms and radial spokes. Coassembles with DRC1 to form a central scaffold needed for assembly of the N-DRC and its attachment to the outer doublet microtubules. The protein is Dynein regulatory complex subunit 2 (Ccdc65) of Rattus norvegicus (Rat).